Here is a 274-residue protein sequence, read N- to C-terminus: 2,3,4,5-tetrahydropyridine-2,6-dicarboxylate N-succinyltransferase (274 aa).

The protein belongs to the transferase hexapeptide repeat family.

The protein localises to the cytoplasm. The catalysed reaction is (S)-2,3,4,5-tetrahydrodipicolinate + succinyl-CoA + H2O = (S)-2-succinylamino-6-oxoheptanedioate + CoA. It functions in the pathway amino-acid biosynthesis; L-lysine biosynthesis via DAP pathway; LL-2,6-diaminopimelate from (S)-tetrahydrodipicolinate (succinylase route): step 1/3. The protein is 2,3,4,5-tetrahydropyridine-2,6-dicarboxylate N-succinyltransferase of Proteus mirabilis (strain HI4320).